A 277-amino-acid chain; its full sequence is Energy-coupling factor transporter ATP-binding protein EcfA1 (277 aa).

The ABC transporter domain occupies Leu-5 to Asp-240. Residue Gly-40–Ser-47 participates in ATP binding.

The protein belongs to the ABC transporter superfamily. Energy-coupling factor EcfA family. As to quaternary structure, forms a stable energy-coupling factor (ECF) transporter complex composed of 2 membrane-embedded substrate-binding proteins (S component), 2 ATP-binding proteins (A component) and 2 transmembrane proteins (T component).

It is found in the cell membrane. In terms of biological role, ATP-binding (A) component of a common energy-coupling factor (ECF) ABC-transporter complex. Unlike classic ABC transporters this ECF transporter provides the energy necessary to transport a number of different substrates. This Lactococcus lactis subsp. lactis (strain IL1403) (Streptococcus lactis) protein is Energy-coupling factor transporter ATP-binding protein EcfA1.